The primary structure comprises 237 residues: NAD-dependent protein deacetylase (237 aa).

The region spanning 1-237 is the Deacetylase sirtuin-type domain; the sequence is MFTTSLRQAQ…LVETNRALQK (237 aa). The NAD(+) site is built by Ala18, Thr22, Phe29, Arg30, Gln95, Asp98, and His113. Phe29 contributes to the nicotinamide binding site. Asp98 is a nicotinamide binding site. Catalysis depends on His113, which acts as the Proton acceptor. Residues Cys121, Cys124, Cys140, and Cys142 each coordinate Zn(2+). NAD(+)-binding residues include Ser180, Ser181, Asn205, and Ile224.

The protein belongs to the sirtuin family. Class U subfamily. Zn(2+) serves as cofactor.

The protein localises to the cytoplasm. It catalyses the reaction N(6)-acetyl-L-lysyl-[protein] + NAD(+) + H2O = 2''-O-acetyl-ADP-D-ribose + nicotinamide + L-lysyl-[protein]. In terms of biological role, NAD-dependent protein deacetylase which modulates the activities of several enzymes which are inactive in their acetylated form. This chain is NAD-dependent protein deacetylase, found in Shouchella clausii (strain KSM-K16) (Alkalihalobacillus clausii).